A 549-amino-acid chain; its full sequence is Glucose-6-phosphate isomerase (549 aa).

3 positions are modified to N6-acetyllysine: Lys-80, Lys-228, and Lys-234. The active-site Proton donor is Glu-355. Residues His-386 and Lys-514 contribute to the active site.

The protein belongs to the GPI family.

It localises to the cytoplasm. The enzyme catalyses alpha-D-glucose 6-phosphate = beta-D-fructose 6-phosphate. It participates in carbohydrate biosynthesis; gluconeogenesis. The protein operates within carbohydrate degradation; glycolysis; D-glyceraldehyde 3-phosphate and glycerone phosphate from D-glucose: step 2/4. In terms of biological role, catalyzes the reversible isomerization of glucose-6-phosphate to fructose-6-phosphate. The chain is Glucose-6-phosphate isomerase from Escherichia fergusonii (strain ATCC 35469 / DSM 13698 / CCUG 18766 / IAM 14443 / JCM 21226 / LMG 7866 / NBRC 102419 / NCTC 12128 / CDC 0568-73).